We begin with the raw amino-acid sequence, 137 residues long: Nucleoside diphosphate kinase (137 aa).

ATP contacts are provided by Lys-9, Phe-57, Arg-85, Thr-91, Arg-102, and Asn-112. His-115 serves as the catalytic Pros-phosphohistidine intermediate.

Belongs to the NDK family. As to quaternary structure, homotetramer. Mg(2+) is required as a cofactor.

The protein localises to the cytoplasm. The enzyme catalyses a 2'-deoxyribonucleoside 5'-diphosphate + ATP = a 2'-deoxyribonucleoside 5'-triphosphate + ADP. It catalyses the reaction a ribonucleoside 5'-diphosphate + ATP = a ribonucleoside 5'-triphosphate + ADP. In terms of biological role, major role in the synthesis of nucleoside triphosphates other than ATP. The ATP gamma phosphate is transferred to the NDP beta phosphate via a ping-pong mechanism, using a phosphorylated active-site intermediate. The sequence is that of Nucleoside diphosphate kinase from Sulfurovum sp. (strain NBC37-1).